Consider the following 455-residue polypeptide: UDP-N-acetylmuramoylalanine--D-glutamate ligase (455 aa).

117 to 123 serves as a coordination point for ATP; that stretch reads GSAGKTT.

It belongs to the MurCDEF family.

It localises to the cytoplasm. It catalyses the reaction UDP-N-acetyl-alpha-D-muramoyl-L-alanine + D-glutamate + ATP = UDP-N-acetyl-alpha-D-muramoyl-L-alanyl-D-glutamate + ADP + phosphate + H(+). The protein operates within cell wall biogenesis; peptidoglycan biosynthesis. Its function is as follows. Cell wall formation. Catalyzes the addition of glutamate to the nucleotide precursor UDP-N-acetylmuramoyl-L-alanine (UMA). The chain is UDP-N-acetylmuramoylalanine--D-glutamate ligase from Symbiobacterium thermophilum (strain DSM 24528 / JCM 14929 / IAM 14863 / T).